The chain runs to 133 residues: Vesicle transport protein GOT1A (133 aa).

The Cytoplasmic portion of the chain corresponds to 1–9 (MISITEWQK). Residues 10-30 (IGVGITGFGVFFILFGILLYF) form a helical membrane-spanning segment. Asp-31 is a topological domain (lumenal). Residues 32 to 52 (SVLLAFGNLLFLTGLSLIIGL) traverse the membrane as a helical segment. Residues 53–68 (RRTFAFFFQRHKLKGT) lie on the Cytoplasmic side of the membrane. Residues 69–89 (SFFLGGVAIVLLRWPLLGMLL) form a helical membrane-spanning segment. The Lumenal portion of the chain corresponds to 90–92 (EAY). The chain crosses the membrane as a helical span at residues 93–113 (GFISLFKGFFPVVFGFLGSAF). Topologically, residues 114 to 133 (NIPFLSTLFQKLQGSSSSMV) are cytoplasmic.

It belongs to the GOT1 family.

It localises to the golgi apparatus membrane. May be involved in fusion of ER-derived transport vesicles with the Golgi complex. The chain is Vesicle transport protein GOT1A from Mus musculus (Mouse).